The sequence spans 691 residues: Hormonally up-regulated neu tumor-associated kinase homolog A (691 aa).

Residues 55 to 313 enclose the Protein kinase domain; sequence YLIGRKLGEG…IQQALANRWL (259 aa). Residues 61-69 and Lys-84 contribute to the ATP site; that span reads LGEGSFAKV. Asp-179 (proton acceptor) is an active-site residue. Positions 406–425 are enriched in basic and acidic residues; sequence MNKNSYEERRSKDLEKRGEP. Disordered stretches follow at residues 406-475, 499-518, 580-640, and 655-679; these read MNKN…GGLS, QSPD…HSQE, FQFD…SRGR, and QVVS…SPGY. The span at 440–453 shows a compositional bias: polar residues; sequence SHRQNACLTPQGHS. The span at 457-470 shows a compositional bias: basic and acidic residues; the sequence is PVKERRSSKSERES. Polar residues predominate over residues 582-597; the sequence is FDNTSPSKSHFNQASF. Positions 604-620 are enriched in low complexity; sequence SPSSPESMSPTSPHSPS. A compositionally biased stretch (polar residues) spans 621–631; sequence CNNNISGNLGS.

It belongs to the protein kinase superfamily. CAMK Ser/Thr protein kinase family. SNF1 subfamily.

The catalysed reaction is L-seryl-[protein] + ATP = O-phospho-L-seryl-[protein] + ADP + H(+). It catalyses the reaction L-threonyl-[protein] + ATP = O-phospho-L-threonyl-[protein] + ADP + H(+). In Xenopus laevis (African clawed frog), this protein is Hormonally up-regulated neu tumor-associated kinase homolog A (hunk-a).